Reading from the N-terminus, the 65-residue chain is Large ribosomal subunit protein bL35 (65 aa).

The protein belongs to the bacterial ribosomal protein bL35 family.

The sequence is that of Large ribosomal subunit protein bL35 from Aeromonas hydrophila subsp. hydrophila (strain ATCC 7966 / DSM 30187 / BCRC 13018 / CCUG 14551 / JCM 1027 / KCTC 2358 / NCIMB 9240 / NCTC 8049).